The chain runs to 221 residues: ATP phosphoribosyltransferase (221 aa).

The protein belongs to the ATP phosphoribosyltransferase family. Short subfamily. In terms of assembly, heteromultimer composed of HisG and HisZ subunits.

The protein resides in the cytoplasm. It carries out the reaction 1-(5-phospho-beta-D-ribosyl)-ATP + diphosphate = 5-phospho-alpha-D-ribose 1-diphosphate + ATP. It functions in the pathway amino-acid biosynthesis; L-histidine biosynthesis; L-histidine from 5-phospho-alpha-D-ribose 1-diphosphate: step 1/9. Functionally, catalyzes the condensation of ATP and 5-phosphoribose 1-diphosphate to form N'-(5'-phosphoribosyl)-ATP (PR-ATP). Has a crucial role in the pathway because the rate of histidine biosynthesis seems to be controlled primarily by regulation of HisG enzymatic activity. This chain is ATP phosphoribosyltransferase, found in Anaeromyxobacter sp. (strain K).